The following is a 301-amino-acid chain: tRNA pseudouridine synthase B (301 aa).

The active-site Nucleophile is the D45.

Belongs to the pseudouridine synthase TruB family. Type 1 subfamily.

It carries out the reaction uridine(55) in tRNA = pseudouridine(55) in tRNA. Functionally, responsible for synthesis of pseudouridine from uracil-55 in the psi GC loop of transfer RNAs. This is tRNA pseudouridine synthase B from Streptomyces coelicolor (strain ATCC BAA-471 / A3(2) / M145).